Reading from the N-terminus, the 131-residue chain is C-glycoside deglycosidase beta subunit (131 aa).

It belongs to the C-glycoside deglycosidase beta subunit family. As to quaternary structure, heterodimer composed of an alpha subunit (CarB) and a beta subunit (CarC). It depends on a divalent metal cation as a cofactor.

The catalysed reaction is 3''-dehydroisovitexin = 1,5-anhydro-D-erythro-hex-1-en-3-ulose + apigenin. It carries out the reaction 3''-dehydroisoorientin = 1,5-anhydro-D-erythro-hex-1-en-3-ulose + luteolin. Its function is as follows. Carbon-carbon bond-cleaving enzyme which participates in the metabolism of C-glycosides. Acts on the C6-glycosylated compounds 3''-dehydroisovitexin (3''-oxo-isovitexin) and 3''-dehydroisoorientin (3''-oxo-homoorientin). Shows weak activity with 3'-dehydromangiferin (3'-oxo-mangiferin). The chain is C-glycoside deglycosidase beta subunit from Microbacterium trichothecenolyticum (Aureobacterium trichothecenolyticum).